Reading from the N-terminus, the 323-residue chain is Ethanolamine-phosphate cytidylyltransferase (323 aa).

It belongs to the cytidylyltransferase family.

It localises to the cytoplasm. The protein resides in the nucleus. The enzyme catalyses phosphoethanolamine + CTP + H(+) = CDP-ethanolamine + diphosphate. It functions in the pathway phospholipid metabolism; phosphatidylethanolamine biosynthesis; phosphatidylethanolamine from ethanolamine: step 2/3. Ethanolamine-phosphate cytidylyltransferase which catalyzes the second step of phosphatidylethanolamine biosynthesis. Involved in the maintenance of plasma membrane and required for proper sporulation. This Saccharomyces cerevisiae (strain ATCC 204508 / S288c) (Baker's yeast) protein is Ethanolamine-phosphate cytidylyltransferase.